Consider the following 656-residue polypeptide: Protein terminal ear1 (656 aa).

The RRM domain maps to 211–283 (SLVVLSPLPG…RRLVVEFTRP (73 aa)). 2 disordered regions span residues 280-408 (FTRP…WKGR) and 576-656 (LTDP…GYDD). Residues 288–299 (PRRRGYAPHQHR) show a composition bias toward basic residues. Residues 314–331 (PSQPTSSQPPASSSSSGS) are compositionally biased toward low complexity. The segment covering 346 to 358 (CKSSAGSDQSSKG) has biased composition (polar residues). Composition is skewed to low complexity over residues 377–397 (AAAA…QKGV), 585–601 (RSPA…SRAA), and 612–630 (PAPS…STHA). Residues 642–656 (DIRLAGELRRLGYDD) are compositionally biased toward basic and acidic residues.

In terms of tissue distribution, expressed below the shoot tip down the flanks of shoot apex in an alternating pattern. Not expressed in root tips, leaves or immature ears (female inflorescences).

Probable RNA-binding protein. Involved in the regulation of leaf initiation rate and shoot development. Seems to act more predominantly in the early stages of the leaf development, rather than in the later phase. The chain is Protein terminal ear1 (TE1) from Zea mays (Maize).